Consider the following 293-residue polypeptide: Elongation factor Ts (293 aa).

Positions 81-84 (TDFV) are involved in Mg(2+) ion dislocation from EF-Tu.

This sequence belongs to the EF-Ts family.

The protein resides in the cytoplasm. Associates with the EF-Tu.GDP complex and induces the exchange of GDP to GTP. It remains bound to the aminoacyl-tRNA.EF-Tu.GTP complex up to the GTP hydrolysis stage on the ribosome. The chain is Elongation factor Ts from Teredinibacter turnerae (strain ATCC 39867 / T7901).